The sequence spans 911 residues: MPPRRSIVEVKVLDVQKRRVPNKHYVYIIRVTWSSGSTEAIYRRYSKFFDLQMQMLDKFPMEGGQKDPKQRIIPFLPGKILFRRSHIRDVAVKRLIPIDEYCKALIQLPPYISQCDEVLQFFETRPEDLNPPKEEHIGKKKSGGDQTSVDPMVLEQYVVVANYQKQESSEISLSVGQVVDIIEKNESGWWFVSTAEEQGWVPATCLEGQDGVQDEFSLQPEEEEKYTVIYPYTARDQDEMNLERGAVVEVIQKNLEGWWKIRYQGKEGWAPASYLKKNSGEPLPPKPGPGSPSHPGALDLDGVSRQQNAVGREKELLSSQRDGRFEGRPVPDGDAKQRSPKMRQRPPPRRDMTIPRGLNLPKPPIPPQVEEEYYTIAEFQTTIPDGISFQAGLKVEVIEKNLSGWWYIQIEDKEGWAPATFIDKYKKTSNASRPNFLAPLPHEVTQLRLGEAAALENNTGSEATGPSRPLPDAPHGVMDSGLPWSKDWKGSKDVLRKASSDMSASAGYEEISDPDMEEKPSLPPRKESIIKSEGELLERERERQRTEQLRGPTPKPPGVILPMMPAKHIPPARDSRRPEPKPDKSRLFQLKNDMGLECGHKVLAKEVKKPNLRPISKSKTDLPEEKPDATPQNPFLKSRPQVRPKPAPSPKTEPPQGEDQVDICNLRSKLRPAKSQDKSLLDGEGPQAVGGQDVAFSRSFLPGEGPGRAQDRTGKQDGLSPKEISCRAPPRPAKTTDPVSKSVPVPLQEAPQQRPVVPPRRPPPPKKTSSSSRPLPEVRGPQCEGHESRAAPTPGRALLVPPKAKPFLSNSLGGQDDTRGKGSLGPWGTGKIGENREKAAAASVPNADGLKDSLYVAVADFEGDKDTSSFQEGTVFEVREKNSSGWWFCQVLSGAPSWEGWIPSNYLRKKP.

The PX domain occupies 5–129 (RSIVEVKVLD…QFFETRPEDL (125 aa)). Tyr25 carries the phosphotyrosine modification. SH3 domains lie at 152–211 (MVLE…GQDG) and 221–280 (EEEE…KNSG). Residues 275–366 (LKKNSGEPLP…GLNLPKPPIP (92 aa)) form a disordered region. A phosphoserine mark is found at Ser279 and Ser291. The segment covering 282–292 (PLPPKPGPGSP) has biased composition (pro residues). The span at 311–337 (GREKELLSSQRDGRFEGRPVPDGDAKQ) shows a compositional bias: basic and acidic residues. Positions 338–347 (RSPKMRQRPP) are enriched in basic residues. An SH3 3 domain is found at 368–427 (QVEEEYYTIAEFQTTIPDGISFQAGLKVEVIEKNLSGWWYIQIEDKEGWAPATFIDKYKK). The disordered stretch occupies residues 458 to 834 (NTGSEATGPS…GPWGTGKIGE (377 aa)). Composition is skewed to basic and acidic residues over residues 486–499 (KDWK…RKAS), 517–548 (EEKP…RTEQ), 571–586 (PARD…DKSR), 598–609 (CGHKVLAKEVKK), and 618–628 (SKTDLPEEKPD). 2 positions are modified to phosphoserine: Ser499 and Ser528. Composition is skewed to pro residues over residues 643–653 (RPKPAPSPKTE) and 756–766 (VVPPRRPPPPK). The span at 822–831 (GSLGPWGTGK) shows a compositional bias: gly residues. At Ser843 the chain carries Phosphoserine. The SH3 4 domain occupies 850 to 911 (LKDSLYVAVA…IPSNYLRKKP (62 aa)).

The protein belongs to the SH3PXD2 family. As to quaternary structure, interacts with ADAM15. Interacts with NOXO1. Interacts (via SH3 domains) with NOXA1; the interaction is direct. Interacts with FASLG. Post-translationally, phosphorylated in SRC-transformed cells. In terms of tissue distribution, expressed in fibroblasts.

The protein resides in the cytoplasm. The protein localises to the cell projection. It is found in the podosome. In terms of biological role, adapter protein involved in invadopodia and podosome formation and extracellular matrix degradation. Binds matrix metalloproteinases (ADAMs), NADPH oxidases (NOXs) and phosphoinositides. Acts as an organizer protein that allows NOX1- or NOX3-dependent reactive oxygen species (ROS) generation and ROS localization. Plays a role in mitotic clonal expansion during the immediate early stage of adipocyte differentiation. This chain is SH3 and PX domain-containing protein 2B (SH3PXD2B), found in Homo sapiens (Human).